Consider the following 1889-residue polypeptide: Treslin (1889 aa).

Phosphoserine occurs at positions 295, 599, 820, 861, 919, 934, 1002, 1027, and 1078. The segment covering 812-832 has biased composition (low complexity); the sequence is DSMSQESMSPPPSSSTHRSVS. The segment at 812–836 is disordered; sequence DSMSQESMSPPPSSSTHRSVSAITE. A disordered region spans residues 979–1063; sequence RLLHRQIKGR…RENFPVQSIQ (85 aa). Residues 1020-1050 show a composition bias toward polar residues; the sequence is LSFSRTNSGSFYSVSQPKSRSVQRIHSSQQE. 6 disordered regions span residues 1098-1421, 1471-1508, 1520-1543, 1630-1714, 1730-1751, and 1841-1875; these read EIST…SQFS, LPGE…SSSE, GKQR…SPQT, SCTP…SLEQ, VCQL…ETSW, and QGRT…TLSR. A compositionally biased stretch (polar residues) spans 1127-1179; that stretch reads TAQTLLYTPERLQNSPTEMTSAEGTISEATIKTPSSHGYNSPFASKVTSQKTV. Thr-1134 carries the post-translational modification Phosphothreonine. Residue Ser-1141 is modified to Phosphoserine. Residues 1187–1197 show a composition bias toward low complexity; that stretch reads SPPLTKLPSTP. The span at 1203-1219 shows a compositional bias: polar residues; that stretch reads QPPQCSSDCTWPHSVNS. Residues 1339–1351 are compositionally biased toward low complexity; the sequence is TSPSVTSSVSCPV. The span at 1373 to 1382 shows a compositional bias: basic residues; that stretch reads KLRRSCRKKS. Ser-1406 bears the Phosphoserine mark. Positions 1496–1508 are enriched in low complexity; the sequence is LVPAPSSVSSSSE. 2 stretches are compositionally biased toward polar residues: residues 1525–1543 and 1652–1662; these read DAAQ…SPQT and WTPSPKQSGKT. Over residues 1705–1714 the composition is skewed to basic and acidic residues; the sequence is PEGKERSLEQ.

The protein belongs to the treslin family. As to quaternary structure, interacts with TOPBP1 (via BRCT domains); interaction takes place in a CDK2-dependent manner. Component of the replisome complex composed of at least DONSON, MCM2, MCM7, PCNA and TICRR.

It is found in the nucleus. Its function is as follows. Regulator of DNA replication and S/M and G2/M checkpoints. Regulates the triggering of DNA replication initiation via its interaction with TOPBP1 by participating in CDK2-mediated loading of CDC45L onto replication origins. Required for the transition from pre-replication complex (pre-RC) to pre-initiation complex (pre-IC). Required to prevent mitotic entry after treatment with ionizing radiation. The polypeptide is Treslin (Ticrr) (Mus musculus (Mouse)).